Consider the following 1709-residue polypeptide: Protein SHORTAGE IN CHIASMATA 1 homolog (1709 aa).

3 stretches are compositionally biased toward basic and acidic residues: residues 532-542, 552-568, and 1601-1613; these read PKLQDEDKHSD, DPQK…EGGT, and ESFR…DTPS. Disordered stretches follow at residues 532–586 and 1566–1662; these read PKLQ…SSFP and KRKA…DPTW.

The protein belongs to the XPF family. In terms of assembly, interacts (via C-terminus) with PTD. Interacts with ZIP4. Highly expressed in anthers and pistil during meiosis. Expressed in pollen mother cells (PMCs) during meiosis. Expressed at low levels in roots, shoots, leaves, flowers, and glumes.

It is found in the chromosome. The protein resides in the nucleus. Its subcellular location is the cytoplasm. The protein localises to the cell membrane. Functionally, essential for normal crossover (CO) formation during meiosis. Essential component for the formation of class I meiotic COs. Interacts with PTD, another meiotic component, to regulate CO formation, possibly by stabilizing the recombination intermediates during meiosis. SHOC1 and PTD may form transient heterotrimeric or heterotetrameric complexes with HEI10 and/or ZIP4 to promote class I COs formation. Does not seem to be involved in early meiotic recombination steps involving double-strand break (DSB) formation, processing, and single-strand invasion. Does not seem to be involved in homologous pairing or synaptonemal complex (SC) assembly. The chain is Protein SHORTAGE IN CHIASMATA 1 homolog from Oryza sativa subsp. japonica (Rice).